Here is a 465-residue protein sequence, read N- to C-terminus: MAFEDYFSFQIFFIFLRESLEIVVIVSILLTIVKQGLSVEDDSPFEGSSSSAGLPSPNTNTNADSTTAFLQAGPSDGNAIGTSATAANNKSRPLNVEEEEEIYEYSNELRDQDRESDEHTADNVKLYQKLKIQILAGGAFGLLLCMLIGGAFVSIFYHIGTDLWTLSEHYYEGVLSLVASVIISVMGLFFLRMGKLREKFRVKLASIIYSKDNNLLGNKTQKGVKFSEKYSFFILPFITTLREGLEAVVFIGGIGIDQPLSSIPLSMVLATAISTVFGIFFFRYSSSLSLKICLVVATCFLYLIAAGLFSKGVWQLELQDYVNKCNGQDMSEVGNGPGSYDISRSVWHVNCCNGEKDGGWMIFTAIFGWTNSATVGSVISYNAYWLVLICALKLLMIEEKYGYIPYLPISWQKKRIMKRLSIAKASLDLKHHTSELNSSTSEPDSQRRSKDSSVPLIIDSSGSAN.

Topologically, residues 1–11 are vacuolar; the sequence is MAFEDYFSFQI. The chain crosses the membrane as a helical span at residues 12-32; it reads FFIFLRESLEIVVIVSILLTI. Topologically, residues 33–135 are cytoplasmic; the sequence is VKQGLSVEDD…LYQKLKIQIL (103 aa). Residues 44–66 form a disordered region; that stretch reads PFEGSSSSAGLPSPNTNTNADST. Residues 46–66 are compositionally biased toward polar residues; the sequence is EGSSSSAGLPSPNTNTNADST. The helical transmembrane segment at 136–156 threads the bilayer; it reads AGGAFGLLLCMLIGGAFVSIF. Over 157-170 the chain is Vacuolar; that stretch reads YHIGTDLWTLSEHY. Residues 171-191 traverse the membrane as a helical segment; it reads YEGVLSLVASVIISVMGLFFL. The Cytoplasmic segment spans residues 192–289; it reads RMGKLREKFR…FFFRYSSSLS (98 aa). Residues 290 to 310 form a helical membrane-spanning segment; sequence LKICLVVATCFLYLIAAGLFS. Residues 311 to 358 are Vacuolar-facing; the sequence is KGVWQLELQDYVNKCNGQDMSEVGNGPGSYDISRSVWHVNCCNGEKDG. The helical transmembrane segment at 359–379 threads the bilayer; that stretch reads GWMIFTAIFGWTNSATVGSVI. Residues 380 to 465 lie on the Cytoplasmic side of the membrane; that stretch reads SYNAYWLVLI…LIIDSSGSAN (86 aa). The segment at 433–465 is disordered; the sequence is TSELNSSTSEPDSQRRSKDSSVPLIIDSSGSAN. S449 and S453 each carry phosphoserine.

This sequence belongs to the oxidase-dependent Fe transporter (OFeT) (TC 9.A.10.1) family. Interacts with FET5.

It localises to the vacuole membrane. Its function is as follows. High affinity iron transporter probably involved in transport of intravacuolar stores of iron. This chain is Iron transporter FTH1 (FTH1), found in Saccharomyces cerevisiae (strain ATCC 204508 / S288c) (Baker's yeast).